Here is a 596-residue protein sequence, read N- to C-terminus: Nitrite reductase (596 aa).

The signal sequence occupies residues Met-1–Ala-29. An N-terminal tail region spans residues Gln-30–Pro-76. His-46 contacts heme c. Heme d1 is bound by residues Tyr-54 and Ser-57. Residues Ala-77 to Ala-162 enclose the Cytochrome c domain. Heme c contacts are provided by Cys-94, Cys-97, His-98, Lys-108, and Tyr-122. The heme d1 site is built by Trp-138, Arg-203, His-229, Arg-232, Arg-245, Arg-272, Tyr-292, Arg-420, Gln-536, and Thr-583. The D1-heme domain stretch occupies residues Pro-163–Tyr-596.

As to quaternary structure, homodimer. Heme c is required as a cofactor. The cofactor is heme.

It is found in the periplasm. The enzyme catalyses nitric oxide + Fe(III)-[cytochrome c] + H2O = Fe(II)-[cytochrome c] + nitrite + 2 H(+). It carries out the reaction A + NH4(+) + H2O = hydroxylamine + AH2 + H(+). In terms of biological role, inactivation of this cytochrome oxidase results in the loss of nitrite and nitric oxide reductase activities, but not of nitrous oxide reductase activity. The sequence is that of Nitrite reductase (nirS) from Paracoccus denitrificans (strain Pd 1222).